A 177-amino-acid polypeptide reads, in one-letter code: Ferritin light chain, oocyte isoform (177 aa).

The 150-residue stretch at 9–158 (QNYHEESEAG…DHLTNLRRVK (150 aa)) folds into the Ferritin-like diiron domain. Fe cation-binding residues include glutamate 26, histidine 64, and glutamate 106.

Belongs to the ferritin family. Oligomer of 24 subunits. There are two types of subunits: L (light) chain and H (heavy) chain. The functional molecule is roughly spherical and contains a central cavity into which the insoluble mineral iron core is deposited.

In terms of biological role, stores iron in a soluble, non-toxic, readily available form. Important for iron homeostasis. Iron is taken up in the ferrous form and deposited as ferric hydroxides after oxidation. This chain is Ferritin light chain, oocyte isoform, found in Xenopus laevis (African clawed frog).